A 316-amino-acid chain; its full sequence is Ribose-phosphate pyrophosphokinase (316 aa).

Residues 41–43 (DGE) and 100–101 (RQ) contribute to the ATP site. Mg(2+) contacts are provided by His-134 and Asp-174. Lys-197 is an active-site residue. Residues Arg-199, Asp-223, and 227-231 (DTAGT) each bind D-ribose 5-phosphate.

The protein belongs to the ribose-phosphate pyrophosphokinase family. Class I subfamily. Homohexamer. Mg(2+) serves as cofactor.

The protein resides in the cytoplasm. The enzyme catalyses D-ribose 5-phosphate + ATP = 5-phospho-alpha-D-ribose 1-diphosphate + AMP + H(+). It functions in the pathway metabolic intermediate biosynthesis; 5-phospho-alpha-D-ribose 1-diphosphate biosynthesis; 5-phospho-alpha-D-ribose 1-diphosphate from D-ribose 5-phosphate (route I): step 1/1. Its function is as follows. Involved in the biosynthesis of the central metabolite phospho-alpha-D-ribosyl-1-pyrophosphate (PRPP) via the transfer of pyrophosphoryl group from ATP to 1-hydroxyl of ribose-5-phosphate (Rib-5-P). This is Ribose-phosphate pyrophosphokinase from Caldanaerobacter subterraneus subsp. tengcongensis (strain DSM 15242 / JCM 11007 / NBRC 100824 / MB4) (Thermoanaerobacter tengcongensis).